A 238-amino-acid polypeptide reads, in one-letter code: Phosphoribosylaminoimidazole-succinocarboxamide synthase (238 aa).

Belongs to the SAICAR synthetase family.

The catalysed reaction is 5-amino-1-(5-phospho-D-ribosyl)imidazole-4-carboxylate + L-aspartate + ATP = (2S)-2-[5-amino-1-(5-phospho-beta-D-ribosyl)imidazole-4-carboxamido]succinate + ADP + phosphate + 2 H(+). It participates in purine metabolism; IMP biosynthesis via de novo pathway; 5-amino-1-(5-phospho-D-ribosyl)imidazole-4-carboxamide from 5-amino-1-(5-phospho-D-ribosyl)imidazole-4-carboxylate: step 1/2. This chain is Phosphoribosylaminoimidazole-succinocarboxamide synthase, found in Nitrosococcus oceani (strain ATCC 19707 / BCRC 17464 / JCM 30415 / NCIMB 11848 / C-107).